The sequence spans 426 residues: Serine--tRNA ligase (426 aa).

231 to 233 is a binding site for L-serine; it reads TAE. 262 to 264 provides a ligand contact to ATP; it reads RSE. Glu285 contributes to the L-serine binding site. Residue 349–352 participates in ATP binding; that stretch reads EISS. Residue Ser385 participates in L-serine binding.

Belongs to the class-II aminoacyl-tRNA synthetase family. Type-1 seryl-tRNA synthetase subfamily. Homodimer. The tRNA molecule binds across the dimer.

Its subcellular location is the cytoplasm. It carries out the reaction tRNA(Ser) + L-serine + ATP = L-seryl-tRNA(Ser) + AMP + diphosphate + H(+). The catalysed reaction is tRNA(Sec) + L-serine + ATP = L-seryl-tRNA(Sec) + AMP + diphosphate + H(+). Its pathway is aminoacyl-tRNA biosynthesis; selenocysteinyl-tRNA(Sec) biosynthesis; L-seryl-tRNA(Sec) from L-serine and tRNA(Sec): step 1/1. In terms of biological role, catalyzes the attachment of serine to tRNA(Ser). Is also able to aminoacylate tRNA(Sec) with serine, to form the misacylated tRNA L-seryl-tRNA(Sec), which will be further converted into selenocysteinyl-tRNA(Sec). The sequence is that of Serine--tRNA ligase from Brevibacillus brevis (strain 47 / JCM 6285 / NBRC 100599).